The chain runs to 1412 residues: DNA-directed RNA polymerase subunit beta' (1412 aa).

4 residues coordinate Zn(2+): cysteine 70, cysteine 72, cysteine 85, and cysteine 88. 3 residues coordinate Mg(2+): aspartate 460, aspartate 462, and aspartate 464. Cysteine 819, cysteine 893, cysteine 900, and cysteine 903 together coordinate Zn(2+). The disordered stretch occupies residues 1393-1412 (EAFEFGTPSAPAEEPQHPAE).

Belongs to the RNA polymerase beta' chain family. The RNAP catalytic core consists of 2 alpha, 1 beta, 1 beta' and 1 omega subunit. When a sigma factor is associated with the core the holoenzyme is formed, which can initiate transcription. Requires Mg(2+) as cofactor. Zn(2+) is required as a cofactor.

The enzyme catalyses RNA(n) + a ribonucleoside 5'-triphosphate = RNA(n+1) + diphosphate. In terms of biological role, DNA-dependent RNA polymerase catalyzes the transcription of DNA into RNA using the four ribonucleoside triphosphates as substrates. This Burkholderia pseudomallei (strain 1106a) protein is DNA-directed RNA polymerase subunit beta'.